A 377-amino-acid polypeptide reads, in one-letter code: Homoserine O-succinyltransferase (377 aa).

In terms of domain architecture, AB hydrolase-1 spans 45-356 (NAVLVCHALN…PHGHDAFLLD (312 aa)). The Nucleophile role is filled by serine 151. Arginine 221 lines the substrate pocket. Catalysis depends on residues aspartate 317 and histidine 350. Aspartate 351 lines the substrate pocket.

This sequence belongs to the AB hydrolase superfamily. MetX family. Homodimer.

The protein resides in the cytoplasm. The catalysed reaction is L-homoserine + succinyl-CoA = O-succinyl-L-homoserine + CoA. Its pathway is amino-acid biosynthesis; L-methionine biosynthesis via de novo pathway; O-succinyl-L-homoserine from L-homoserine: step 1/1. Transfers a succinyl group from succinyl-CoA to L-homoserine, forming succinyl-L-homoserine. In Leptothrix cholodnii (strain ATCC 51168 / LMG 8142 / SP-6) (Leptothrix discophora (strain SP-6)), this protein is Homoserine O-succinyltransferase.